The sequence spans 504 residues: Glucose-6-phosphate isomerase (504 aa).

Glu333 (proton donor) is an active-site residue. Residues His364 and Lys473 contribute to the active site.

It belongs to the GPI family.

The protein localises to the cytoplasm. It catalyses the reaction alpha-D-glucose 6-phosphate = beta-D-fructose 6-phosphate. It participates in carbohydrate biosynthesis; gluconeogenesis. The protein operates within carbohydrate degradation; glycolysis; D-glyceraldehyde 3-phosphate and glycerone phosphate from D-glucose: step 2/4. Catalyzes the reversible isomerization of glucose-6-phosphate to fructose-6-phosphate. The chain is Glucose-6-phosphate isomerase from Xanthomonas oryzae pv. oryzae (strain KACC10331 / KXO85).